Here is a 786-residue protein sequence, read N- to C-terminus: Endonuclease MutS2 (786 aa).

Residue 332 to 339 coordinates ATP; it reads GPNTGGKT. The Smr domain maps to 711 to 786; the sequence is IDLRGMDSME…GTGVTVVELK (76 aa).

This sequence belongs to the DNA mismatch repair MutS family. MutS2 subfamily. As to quaternary structure, homodimer. Binds to stalled ribosomes, contacting rRNA.

Functionally, endonuclease that is involved in the suppression of homologous recombination and thus may have a key role in the control of bacterial genetic diversity. In terms of biological role, acts as a ribosome collision sensor, splitting the ribosome into its 2 subunits. Detects stalled/collided 70S ribosomes which it binds and splits by an ATP-hydrolysis driven conformational change. Acts upstream of the ribosome quality control system (RQC), a ribosome-associated complex that mediates the extraction of incompletely synthesized nascent chains from stalled ribosomes and their subsequent degradation. Probably generates substrates for RQC. This chain is Endonuclease MutS2, found in Clostridium tetani (strain Massachusetts / E88).